Here is a 415-residue protein sequence, read N- to C-terminus: ATP-dependent RNA helicase RhlB (415 aa).

A Q motif motif is present at residues 9–37 (QRFSALPLHPIVRGALAKKGFDFCTPIQA). Residues 40 to 218 (LPISLNGRDV…FEDMNDPEYI (179 aa)) enclose the Helicase ATP-binding domain. 53-60 (AQTGTGKT) serves as a coordination point for ATP. The DEAD box motif lies at 164–167 (DEAD). Positions 241 to 389 (DKMALLLTLM…VSQYETEALL (149 aa)) constitute a Helicase C-terminal domain.

The protein belongs to the DEAD box helicase family. RhlB subfamily. Component of the RNA degradosome, which is a multiprotein complex involved in RNA processing and mRNA degradation.

The protein resides in the cytoplasm. The enzyme catalyses ATP + H2O = ADP + phosphate + H(+). DEAD-box RNA helicase involved in RNA degradation. Has RNA-dependent ATPase activity and unwinds double-stranded RNA. The protein is ATP-dependent RNA helicase RhlB of Haemophilus influenzae (strain PittGG).